Here is a 492-residue protein sequence, read N- to C-terminus: Protein kinase US3 homolog (492 aa).

The interval 99–137 (ADLHESQRGQPSGATDSQASTLETESAPPSADSSSSAKL) is disordered. A compositionally biased stretch (polar residues) spans 106–122 (RGQPSGATDSQASTLET). The span at 124 to 135 (SAPPSADSSSSA) shows a compositional bias: low complexity. A Protein kinase domain is found at 147–446 (YRVIGTLPAG…ASELLALPLF (300 aa)). ATP is bound by residues 153–161 (LPAGSFGKI) and lysine 187. Aspartate 281 serves as the catalytic Proton acceptor.

Belongs to the protein kinase superfamily. Ser/Thr protein kinase family. Phosphorylated by UL13 homolog; this phosphorylation regulates subsequent phosphorylation of UL31 and UL34 homologs by US3. Autophosphorylated.

The protein resides in the host cytoplasm. Its subcellular location is the host nucleus. The catalysed reaction is L-seryl-[protein] + ATP = O-phospho-L-seryl-[protein] + ADP + H(+). It carries out the reaction L-threonyl-[protein] + ATP = O-phospho-L-threonyl-[protein] + ADP + H(+). Its function is as follows. Multifunctional serine/threonine kinase that plays a role in several processes including egress of virus particles from the nucleus, modulation of the actin cytoskeleton and inhibition of apoptosis. Phosphorylates UL31 and UL34 homologs, two critical regulators of capsid budding from nucleus to endoplasmic reticulum, thereby facilitating virion egress. Modulates and redistributes host components of the nuclear envelope, including LMNA, emerin/EMD and the nuclear matrix protein MATR3. Phosphorylates envelope glycoprotein B (gB), probably to direct it to the cell surface. Promotes virus intracellular spread by restructuring host cell cytoskeleton. Blocks host apoptosis to extend cell survival and allow efficient viral replication. Promotes viral gene expression by phosphorylating host HDAC2 to reduce viral genome silencing. This is Protein kinase US3 homolog (US3) from Amazona oratrix (yellow-headed parrot).